The following is a 462-amino-acid chain: Asparagine--tRNA ligase (462 aa).

This sequence belongs to the class-II aminoacyl-tRNA synthetase family. Homodimer.

It localises to the cytoplasm. The enzyme catalyses tRNA(Asn) + L-asparagine + ATP = L-asparaginyl-tRNA(Asn) + AMP + diphosphate + H(+). The polypeptide is Asparagine--tRNA ligase (Borrelia garinii subsp. bavariensis (strain ATCC BAA-2496 / DSM 23469 / PBi) (Borreliella bavariensis)).